The primary structure comprises 226 residues: 3-dehydroquinate dehydratase (226 aa).

3-dehydroquinate is bound by residues Ser9, 32 to 34 (EVR), and Arg59. The Proton donor/acceptor role is filled by His119. The active-site Schiff-base intermediate with substrate is the Lys146. 3 residues coordinate 3-dehydroquinate: Arg187, Thr208, and Gln212.

It belongs to the type-I 3-dehydroquinase family. As to quaternary structure, homodimer.

It catalyses the reaction 3-dehydroquinate = 3-dehydroshikimate + H2O. Its pathway is metabolic intermediate biosynthesis; chorismate biosynthesis; chorismate from D-erythrose 4-phosphate and phosphoenolpyruvate: step 3/7. Its function is as follows. Involved in the third step of the chorismate pathway, which leads to the biosynthesis of aromatic amino acids. Catalyzes the cis-dehydration of 3-dehydroquinate (DHQ) and introduces the first double bond of the aromatic ring to yield 3-dehydroshikimate. In Desulfotalea psychrophila (strain LSv54 / DSM 12343), this protein is 3-dehydroquinate dehydratase.